We begin with the raw amino-acid sequence, 271 residues long: Beta-lysine N(6)-acetyltransferase (271 aa).

A disordered region spans residues 86-122; it reads LRKDRGTGKNQKKKKISRKKDNWKKRKEKSRLPEGYT. The segment covering 95 to 114 has biased composition (basic residues); that stretch reads NQKKKKISRKKDNWKKRKEK. Residues 121–269 enclose the N-acetyltransferase domain; that stretch reads YTLRPAVQAD…GFEDMNIWCR (149 aa).

It belongs to the acetyltransferase family.

It carries out the reaction (3S)-3,6-diaminohexanoate + acetyl-CoA = (3S)-6-acetamido-3-aminohexanoate + CoA + H(+). Its function is as follows. Catalyzes the acetylation of beta-lysine to N6-acetyl-beta-lysine, a compatible solute produced by methanogenic archaea that helps cells to cope with salt stress. This is Beta-lysine N(6)-acetyltransferase from Methanosarcina mazei (strain ATCC BAA-159 / DSM 3647 / Goe1 / Go1 / JCM 11833 / OCM 88) (Methanosarcina frisia).